The chain runs to 173 residues: Protein-export protein SecB (173 aa).

Belongs to the SecB family. Homotetramer, a dimer of dimers. One homotetramer interacts with 1 SecA dimer.

It is found in the cytoplasm. Functionally, one of the proteins required for the normal export of preproteins out of the cell cytoplasm. It is a molecular chaperone that binds to a subset of precursor proteins, maintaining them in a translocation-competent state. It also specifically binds to its receptor SecA. The polypeptide is Protein-export protein SecB (Ralstonia nicotianae (strain ATCC BAA-1114 / GMI1000) (Ralstonia solanacearum)).